Reading from the N-terminus, the 407-residue chain is Imidazolonepropionase (407 aa).

Fe(3+) is bound by residues His68 and His70. Zn(2+) is bound by residues His68 and His70. Residues Arg77, Tyr140, and His173 each contribute to the 4-imidazolone-5-propanoate site. Tyr140 provides a ligand contact to N-formimidoyl-L-glutamate. His238 contacts Fe(3+). Residue His238 participates in Zn(2+) binding. Gln241 lines the 4-imidazolone-5-propanoate pocket. Residue Asp313 participates in Fe(3+) binding. Asp313 provides a ligand contact to Zn(2+). Residues Asn315 and Gly317 each contribute to the N-formimidoyl-L-glutamate site. Thr318 serves as a coordination point for 4-imidazolone-5-propanoate.

It belongs to the metallo-dependent hydrolases superfamily. HutI family. The cofactor is Zn(2+). Fe(3+) serves as cofactor.

Its subcellular location is the cytoplasm. It carries out the reaction 4-imidazolone-5-propanoate + H2O = N-formimidoyl-L-glutamate. It participates in amino-acid degradation; L-histidine degradation into L-glutamate; N-formimidoyl-L-glutamate from L-histidine: step 3/3. In terms of biological role, catalyzes the hydrolytic cleavage of the carbon-nitrogen bond in imidazolone-5-propanoate to yield N-formimidoyl-L-glutamate. It is the third step in the universal histidine degradation pathway. This Burkholderia multivorans (strain ATCC 17616 / 249) protein is Imidazolonepropionase.